A 129-amino-acid polypeptide reads, in one-letter code: Natriuretic peptides B (129 aa).

An N-terminal signal peptide occupies residues 1–26 (MDPQTALSRALLLLLFLHLSLLGCRS). An intrachain disulfide couples Cys107 to Cys123.

Belongs to the natriuretic peptide family. The precursor molecule is proteolytically cleaved, possibly by FURIN or CORIN, to produce the active peptide. May undergo further proteolytic cleavage by various proteases such as DPP4, MME and possibly FAP, to give rise to a variety of shorter peptides. May be cleaved at Pro-99 by the prolyl endopeptidase FAP (seprase) activity (in vitro). May be degraded by IDE. During IDE degradation, the resulting products initially increase the activation of NPR1 and can also stimulate NPR2 to produce cGMP before the fragments are completely degraded and inactivated by IDE (in vitro).

The protein localises to the secreted. Cardiac hormone that plays a key role in mediating cardio-renal homeostasis. May also function as a paracrine antifibrotic factor in the heart. Acts by specifically binding and stimulating NPR1 to produce cGMP, which in turn activates effector proteins that drive various biological responses. Involved in regulating the extracellular fluid volume and maintaining the fluid-electrolyte balance through natriuresis, diuresis, vasorelaxation, and inhibition of renin and aldosterone secretion. Binds the clearance receptor NPR3. This Bos taurus (Bovine) protein is Natriuretic peptides B (NPPB).